Consider the following 57-residue polypeptide: Ribosome modulation factor 2 (57 aa).

A disordered region spans residues 1 to 24 (MKRQKRDKLGRAHSNGYQAGLGGK).

Belongs to the ribosome modulation factor family.

Its subcellular location is the cytoplasm. During stationary phase, converts 70S ribosomes to an inactive dimeric form (100S ribosomes). The polypeptide is Ribosome modulation factor 2 (Colwellia psychrerythraea (strain 34H / ATCC BAA-681) (Vibrio psychroerythus)).